The chain runs to 271 residues: Probable ribosome biogenesis GTPase A (271 aa).

Positions 21 to 175 (HDQLKKLASS…LSDTPGVFFK (155 aa)) constitute a CP-type G domain. Residues 127–132 (NVGKSS) and Gly-171 contribute to the GTP site.

Belongs to the TRAFAC class YlqF/YawG GTPase family. MTG1 subfamily.

The protein resides in the cytoplasm. Required for a late step of 50S ribosomal subunit assembly. Has GTPase activity. Binds to the 23S rRNA. This is Probable ribosome biogenesis GTPase A (rbgA) from Mycoplasma pneumoniae (strain ATCC 29342 / M129 / Subtype 1) (Mycoplasmoides pneumoniae).